Consider the following 238-residue polypeptide: tRNA (guanine-N(7)-)-methyltransferase (238 aa).

4 residues coordinate S-adenosyl-L-methionine: Glu-68, Glu-93, Asp-120, and Asp-143. Asp-143 is an active-site residue. Substrate contacts are provided by residues Lys-147, Asp-179, and Thr-216–Glu-219.

Belongs to the class I-like SAM-binding methyltransferase superfamily. TrmB family.

The catalysed reaction is guanosine(46) in tRNA + S-adenosyl-L-methionine = N(7)-methylguanosine(46) in tRNA + S-adenosyl-L-homocysteine. It functions in the pathway tRNA modification; N(7)-methylguanine-tRNA biosynthesis. Catalyzes the formation of N(7)-methylguanine at position 46 (m7G46) in tRNA. The protein is tRNA (guanine-N(7)-)-methyltransferase of Shewanella putrefaciens (strain CN-32 / ATCC BAA-453).